The following is a 76-amino-acid chain: Small ribosomal subunit protein bS18 (76 aa).

The protein belongs to the bacterial ribosomal protein bS18 family. In terms of assembly, part of the 30S ribosomal subunit. Forms a tight heterodimer with protein bS6.

In terms of biological role, binds as a heterodimer with protein bS6 to the central domain of the 16S rRNA, where it helps stabilize the platform of the 30S subunit. In Ectopseudomonas mendocina (strain ymp) (Pseudomonas mendocina), this protein is Small ribosomal subunit protein bS18.